Reading from the N-terminus, the 689-residue chain is Glycine--tRNA ligase beta subunit (689 aa).

The protein belongs to the class-II aminoacyl-tRNA synthetase family. As to quaternary structure, tetramer of two alpha and two beta subunits.

The protein resides in the cytoplasm. It carries out the reaction tRNA(Gly) + glycine + ATP = glycyl-tRNA(Gly) + AMP + diphosphate. This is Glycine--tRNA ligase beta subunit from Erwinia tasmaniensis (strain DSM 17950 / CFBP 7177 / CIP 109463 / NCPPB 4357 / Et1/99).